The following is a 98-amino-acid chain: NADH-ubiquinone oxidoreductase chain 4L (98 aa).

Helical transmembrane passes span 2 to 22, 26 to 46, and 59 to 79; these read QMTM…LLMF, FMSS…LMSI, and FPLV…SLLV.

It belongs to the complex I subunit 4L family. In terms of assembly, core subunit of respiratory chain NADH dehydrogenase (Complex I) which is composed of 45 different subunits.

The protein resides in the mitochondrion inner membrane. The enzyme catalyses a ubiquinone + NADH + 5 H(+)(in) = a ubiquinol + NAD(+) + 4 H(+)(out). Functionally, core subunit of the mitochondrial membrane respiratory chain NADH dehydrogenase (Complex I) which catalyzes electron transfer from NADH through the respiratory chain, using ubiquinone as an electron acceptor. Part of the enzyme membrane arm which is embedded in the lipid bilayer and involved in proton translocation. This Echinosorex gymnura (Moon rat) protein is NADH-ubiquinone oxidoreductase chain 4L (MT-ND4L).